A 258-amino-acid polypeptide reads, in one-letter code: Small ribosomal subunit protein mS23 (258 aa).

Belongs to the mitochondrion-specific ribosomal protein mS23 family. In terms of assembly, component of the mitochondrial small ribosomal subunit.

The protein localises to the mitochondrion. The sequence is that of Small ribosomal subunit protein mS23 from Aspergillus fumigatus (strain CBS 144.89 / FGSC A1163 / CEA10) (Neosartorya fumigata).